Reading from the N-terminus, the 351-residue chain is Increased glyphosate resistance protein (351 aa).

Over residues 1-18 the composition is skewed to basic and acidic residues; the sequence is MHREDDSTSTGRREERLS. A disordered region spans residues 1-29; sequence MHREDDSTSTGRREERLSTGKGDSLQPGP.

In terms of biological role, confers an increase in glyphosate resistance when expressed in E.coli. In Pseudomonas sp. (strain PG2982), this protein is Increased glyphosate resistance protein.